The following is a 50-amino-acid chain: Cuticle protein CP498 (50 aa).

2 tandem repeats follow at residues 6–23 and 30–47.

Calcified shell.

This chain is Cuticle protein CP498, found in Cancer pagurus (Rock crab).